A 156-amino-acid polypeptide reads, in one-letter code: ATP synthase subunit b (156 aa).

A helical membrane pass occupies residues 7–27 (FFAQMVVFFILWWVVAKFIWP).

The protein belongs to the ATPase B chain family. As to quaternary structure, F-type ATPases have 2 components, F(1) - the catalytic core - and F(0) - the membrane proton channel. F(1) has five subunits: alpha(3), beta(3), gamma(1), delta(1), epsilon(1). F(0) has three main subunits: a(1), b(2) and c(10-14). The alpha and beta chains form an alternating ring which encloses part of the gamma chain. F(1) is attached to F(0) by a central stalk formed by the gamma and epsilon chains, while a peripheral stalk is formed by the delta and b chains.

It localises to the cell inner membrane. Its function is as follows. F(1)F(0) ATP synthase produces ATP from ADP in the presence of a proton or sodium gradient. F-type ATPases consist of two structural domains, F(1) containing the extramembraneous catalytic core and F(0) containing the membrane proton channel, linked together by a central stalk and a peripheral stalk. During catalysis, ATP synthesis in the catalytic domain of F(1) is coupled via a rotary mechanism of the central stalk subunits to proton translocation. Component of the F(0) channel, it forms part of the peripheral stalk, linking F(1) to F(0). This chain is ATP synthase subunit b, found in Cupriavidus necator (strain ATCC 17699 / DSM 428 / KCTC 22496 / NCIMB 10442 / H16 / Stanier 337) (Ralstonia eutropha).